The following is a 325-amino-acid chain: uncharacterized protein (325 aa).

Coiled coils occupy residues 38–69 (VHVA…QNQS) and 201–229 (ANTD…LEFK).

This is an uncharacterized protein from Acanthamoeba polyphaga (Amoeba).